The primary structure comprises 577 residues: Proline--tRNA ligase (577 aa).

Belongs to the class-II aminoacyl-tRNA synthetase family. ProS type 1 subfamily. Homodimer.

It localises to the cytoplasm. It catalyses the reaction tRNA(Pro) + L-proline + ATP = L-prolyl-tRNA(Pro) + AMP + diphosphate. In terms of biological role, catalyzes the attachment of proline to tRNA(Pro) in a two-step reaction: proline is first activated by ATP to form Pro-AMP and then transferred to the acceptor end of tRNA(Pro). As ProRS can inadvertently accommodate and process non-cognate amino acids such as alanine and cysteine, to avoid such errors it has two additional distinct editing activities against alanine. One activity is designated as 'pretransfer' editing and involves the tRNA(Pro)-independent hydrolysis of activated Ala-AMP. The other activity is designated 'posttransfer' editing and involves deacylation of mischarged Ala-tRNA(Pro). The misacylated Cys-tRNA(Pro) is not edited by ProRS. In Marinobacter nauticus (strain ATCC 700491 / DSM 11845 / VT8) (Marinobacter aquaeolei), this protein is Proline--tRNA ligase.